Reading from the N-terminus, the 160-residue chain is Ribosomal RNA large subunit methyltransferase H (160 aa).

Residues leucine 76 and glycine 108 each coordinate S-adenosyl-L-methionine.

It belongs to the RNA methyltransferase RlmH family. Homodimer.

It localises to the cytoplasm. It carries out the reaction pseudouridine(1915) in 23S rRNA + S-adenosyl-L-methionine = N(3)-methylpseudouridine(1915) in 23S rRNA + S-adenosyl-L-homocysteine + H(+). Its function is as follows. Specifically methylates the pseudouridine at position 1915 (m3Psi1915) in 23S rRNA. This chain is Ribosomal RNA large subunit methyltransferase H, found in Rhodopseudomonas palustris (strain ATCC BAA-98 / CGA009).